The following is a 235-amino-acid chain: tRNA (guanine-N(1)-)-methyltransferase (235 aa).

S-adenosyl-L-methionine contacts are provided by residues Gly114 and 134 to 139; that span reads IGDYIL.

It belongs to the RNA methyltransferase TrmD family. Homodimer.

It localises to the cytoplasm. It carries out the reaction guanosine(37) in tRNA + S-adenosyl-L-methionine = N(1)-methylguanosine(37) in tRNA + S-adenosyl-L-homocysteine + H(+). Functionally, specifically methylates guanosine-37 in various tRNAs. The chain is tRNA (guanine-N(1)-)-methyltransferase from Ehrlichia ruminantium (strain Gardel).